The primary structure comprises 433 residues: Glutamate-1-semialdehyde 2,1-aminomutase (433 aa).

Lysine 273 carries the post-translational modification N6-(pyridoxal phosphate)lysine.

It belongs to the class-III pyridoxal-phosphate-dependent aminotransferase family. HemL subfamily. As to quaternary structure, homodimer. It depends on pyridoxal 5'-phosphate as a cofactor.

The protein resides in the cytoplasm. It catalyses the reaction (S)-4-amino-5-oxopentanoate = 5-aminolevulinate. It participates in porphyrin-containing compound metabolism; protoporphyrin-IX biosynthesis; 5-aminolevulinate from L-glutamyl-tRNA(Glu): step 2/2. This Ralstonia pickettii (strain 12J) protein is Glutamate-1-semialdehyde 2,1-aminomutase.